A 160-amino-acid chain; its full sequence is Transcription elongation factor GreA (160 aa).

Residues 1-72 adopt a coiled-coil conformation; that stretch reads MAEKTYPMTL…QISSLETKIR (72 aa).

Belongs to the GreA/GreB family.

In terms of biological role, necessary for efficient RNA polymerase transcription elongation past template-encoded arresting sites. The arresting sites in DNA have the property of trapping a certain fraction of elongating RNA polymerases that pass through, resulting in locked ternary complexes. Cleavage of the nascent transcript by cleavage factors such as GreA or GreB allows the resumption of elongation from the new 3'terminus. GreA releases sequences of 2 to 3 nucleotides. This Streptococcus gordonii (strain Challis / ATCC 35105 / BCRC 15272 / CH1 / DL1 / V288) protein is Transcription elongation factor GreA.